A 308-amino-acid chain; its full sequence is Eukaryotic translation initiation factor 3 subunit G-A (308 aa).

Disordered stretches follow at residues 1–35 and 177–226; these read MPTG…KPDP and TGDK…ADDN. Residues 185–194 show a composition bias toward low complexity; that stretch reads GAEPEPAQAP. A compositionally biased stretch (basic and acidic residues) spans 209 to 226; the sequence is GGSRRGESMQPNRRADDN. The RRM domain occupies 227–305; that stretch reads ATIRVTNLSE…LILNVEWAKP (79 aa).

This sequence belongs to the eIF-3 subunit G family. In terms of assembly, component of the eukaryotic translation initiation factor 3 (eIF-3) complex, which is composed of 13 subunits: eif3a, eif3b, eif3c, eif3d, eif3e, eif3f, eif3g, eif3h, eif3i, eif3j, eif3k, eif3l and eif3m.

It localises to the cytoplasm. Functionally, RNA-binding component of the eukaryotic translation initiation factor 3 (eIF-3) complex, which is involved in protein synthesis of a specialized repertoire of mRNAs and, together with other initiation factors, stimulates binding of mRNA and methionyl-tRNAi to the 40S ribosome. The eIF-3 complex specifically targets and initiates translation of a subset of mRNAs involved in cell proliferation. This subunit can bind 18S rRNA. The sequence is that of Eukaryotic translation initiation factor 3 subunit G-A (eif3g-a) from Xenopus laevis (African clawed frog).